Here is a 135-residue protein sequence, read N- to C-terminus: ATP synthase epsilon chain (135 aa).

Belongs to the ATPase epsilon chain family. In terms of assembly, F-type ATPases have 2 components, CF(1) - the catalytic core - and CF(0) - the membrane proton channel. CF(1) has five subunits: alpha(3), beta(3), gamma(1), delta(1), epsilon(1). CF(0) has three main subunits: a, b and c.

The protein resides in the cell inner membrane. Produces ATP from ADP in the presence of a proton gradient across the membrane. The protein is ATP synthase epsilon chain of Nitrobacter winogradskyi (strain ATCC 25391 / DSM 10237 / CIP 104748 / NCIMB 11846 / Nb-255).